The primary structure comprises 280 residues: Fructose-1,6-bisphosphatase class 1 (280 aa).

Residues Glu-64, Asp-83, Leu-85, and Asp-86 each contribute to the Mg(2+) site. Substrate is bound by residues 86–89, Tyr-190, and Lys-221; that span reads DGSS. Glu-227 is a binding site for Mg(2+).

The protein belongs to the FBPase class 1 family. In terms of assembly, homotetramer. Mg(2+) is required as a cofactor.

The protein resides in the cytoplasm. It carries out the reaction beta-D-fructose 1,6-bisphosphate + H2O = beta-D-fructose 6-phosphate + phosphate. It participates in carbohydrate biosynthesis; gluconeogenesis. This chain is Fructose-1,6-bisphosphatase class 1, found in Campylobacter hominis (strain ATCC BAA-381 / DSM 21671 / CCUG 45161 / LMG 19568 / NCTC 13146 / CH001A).